Reading from the N-terminus, the 202-residue chain is Amelogenin (202 aa).

Serine 16 carries the post-translational modification Phosphoserine. Residues 77 to 202 (QPAPPQQPVM…TDKTKREEVD (126 aa)) are disordered. Over residues 78-87 (PAPPQQPVMP) the composition is skewed to pro residues. A compositionally biased stretch (low complexity) spans 101 to 112 (QPNLPQPGQQPY). Positions 113–125 (QPQPAQQPQPHQP) are enriched in pro residues. Positions 126 to 158 (IQPIQPIQPIQPMQPMQPMQPMQPMQPMQPQTP) are enriched in low complexity. The span at 164-176 (PLPPQPPLPPMFP) shows a compositional bias: pro residues.

Belongs to the amelogenin family.

The protein localises to the secreted. It localises to the extracellular space. Its subcellular location is the extracellular matrix. Plays a role in the biomineralization of teeth. Seems to regulate the formation of crystallites during the secretory stage of tooth enamel development. Thought to play a major role in the structural organization and mineralization of developing enamel. The protein is Amelogenin (AMEL) of Monodelphis domestica (Gray short-tailed opossum).